Consider the following 93-residue polypeptide: Acylphosphatase (93 aa).

The region spanning 6 to 92 (RAHVWVGGKV…EGLTHFEVLR (87 aa)) is the Acylphosphatase-like domain. Residues arginine 21 and asparagine 39 contribute to the active site.

Belongs to the acylphosphatase family.

The catalysed reaction is an acyl phosphate + H2O = a carboxylate + phosphate + H(+). This chain is Acylphosphatase (acyP), found in Gloeobacter violaceus (strain ATCC 29082 / PCC 7421).